The sequence spans 972 residues: 116 kDa U5 small nuclear ribonucleoprotein component (972 aa).

The segment at 1-53 (MDTDLYDEFGNYIGPELDSDDEDDELGRESKELDELEDDDDDDDMGDHDEDHP) is disordered. Composition is skewed to acidic residues over residues 17–26 (LDSDDEDDEL) and 34–48 (DELEDDDDDDDMGDH). The tr-type G domain maps to 127-409 (ELIRNVTLCG…GIHLTKEELK (283 aa)). GTP-binding positions include 136–143 (GHLHHGKT), 204–208 (DTPGH), and 258–261 (NKID).

The protein belongs to the TRAFAC class translation factor GTPase superfamily. Classic translation factor GTPase family. EF-G/EF-2 subfamily. As to quaternary structure, component of the U5 snRNP and the U4/U6-U5 tri-snRNP complex, a building block of the spliceosome. Component of the pre-catalytic, catalytic and post-catalytic spliceosome complexes. Component of the minor spliceosome, which splices U12-type introns.

It is found in the nucleus. Its function is as follows. Required for pre-mRNA splicing as component of the spliceosome, including pre-catalytic, catalytic and post-catalytic spliceosomal complexes. Component of the U5 snRNP and the U4/U6-U5 tri-snRNP complex, a building block of the spliceosome. As a component of the minor spliceosome, involved in the splicing of U12-type introns in pre-mRNAs. This is 116 kDa U5 small nuclear ribonucleoprotein component (EFTUD2) from Gallus gallus (Chicken).